A 459-amino-acid polypeptide reads, in one-letter code: Bifunctional protein GlmU (459 aa).

A pyrophosphorylase region spans residues 1–230 (MSNRFAVILA…FDETLGVNDR (230 aa)). UDP-N-acetyl-alpha-D-glucosamine-binding positions include 9-12 (LAAG), K23, Q73, and 78-79 (GT). D103 is a binding site for Mg(2+). UDP-N-acetyl-alpha-D-glucosamine is bound by residues G140, E155, N170, and N228. A Mg(2+)-binding site is contributed by N228. The linker stretch occupies residues 231–251 (VALSQAEIIMKNRINRKNMVN). Residues 252–459 (GVTIIDPSNT…VDQLLNKKKS (208 aa)) are N-acetyltransferase. Residues R333 and K351 each coordinate UDP-N-acetyl-alpha-D-glucosamine. Catalysis depends on H363, which acts as the Proton acceptor. Y366 and N377 together coordinate UDP-N-acetyl-alpha-D-glucosamine. Acetyl-CoA contacts are provided by residues 386 to 387 (NY), A423, and R440.

It in the N-terminal section; belongs to the N-acetylglucosamine-1-phosphate uridyltransferase family. The protein in the C-terminal section; belongs to the transferase hexapeptide repeat family. As to quaternary structure, homotrimer. Mg(2+) serves as cofactor.

It localises to the cytoplasm. The catalysed reaction is alpha-D-glucosamine 1-phosphate + acetyl-CoA = N-acetyl-alpha-D-glucosamine 1-phosphate + CoA + H(+). It carries out the reaction N-acetyl-alpha-D-glucosamine 1-phosphate + UTP + H(+) = UDP-N-acetyl-alpha-D-glucosamine + diphosphate. The protein operates within nucleotide-sugar biosynthesis; UDP-N-acetyl-alpha-D-glucosamine biosynthesis; N-acetyl-alpha-D-glucosamine 1-phosphate from alpha-D-glucosamine 6-phosphate (route II): step 2/2. Its pathway is nucleotide-sugar biosynthesis; UDP-N-acetyl-alpha-D-glucosamine biosynthesis; UDP-N-acetyl-alpha-D-glucosamine from N-acetyl-alpha-D-glucosamine 1-phosphate: step 1/1. It functions in the pathway bacterial outer membrane biogenesis; LPS lipid A biosynthesis. Functionally, catalyzes the last two sequential reactions in the de novo biosynthetic pathway for UDP-N-acetylglucosamine (UDP-GlcNAc). The C-terminal domain catalyzes the transfer of acetyl group from acetyl coenzyme A to glucosamine-1-phosphate (GlcN-1-P) to produce N-acetylglucosamine-1-phosphate (GlcNAc-1-P), which is converted into UDP-GlcNAc by the transfer of uridine 5-monophosphate (from uridine 5-triphosphate), a reaction catalyzed by the N-terminal domain. The sequence is that of Bifunctional protein GlmU from Bacillus cereus (strain ATCC 14579 / DSM 31 / CCUG 7414 / JCM 2152 / NBRC 15305 / NCIMB 9373 / NCTC 2599 / NRRL B-3711).